The chain runs to 380 residues: Homeobox protein ceh-6 (380 aa).

Over residues 1–25 the composition is skewed to low complexity; it reads MLIPSSSSIPSSLSASASDSEPSSL. Disordered regions lie at residues 1-31, 167-190, and 265-286; these read MLIPSSSSIPSSLSASASDSEPSSLNGSGIS, SGSVSGAGGPHQPLSDISDDSEQT, and GSPNSTFEKMTGQAGRKRKKRT. In terms of domain architecture, POU-specific spans 187-261; the sequence is SEQTCPDDLE…LLFKWLEEAD (75 aa). A DNA-binding region (homeobox) is located at residues 281-340; it reads KRKKRTSIEVNVKSRLEFHFQSNQKPNAQEITQVAMELQLEKEVVRVWFCNRRQKEKRIA.

Belongs to the POU transcription factor family. Class-3 subfamily. As to quaternary structure, interacts with egl-27, sox-2 and sem-4. Interacts with wdr-5.1. As to expression, expressed in a series of neurons in the ring ganglia, excretory cell, dividing neuroblasts in the ventral cord and rectal cells.

Its subcellular location is the nucleus. Functionally, vital for embryonic development and essential for the proper function of the excretory cell. Required for the transdifferentiation of the Y rectal epithelial cell to the PDA motor neuron during larval development. This chain is Homeobox protein ceh-6, found in Caenorhabditis elegans.